The sequence spans 1079 residues: DNA annealing helicase and endonuclease ZRANB3 (1079 aa).

The 163-residue stretch at 46 to 208 folds into the Helicase ATP-binding domain; that stretch reads IFALKRNGRC…FMQIEALFPQ (163 aa). Residues 46–481 form a DNA annealing helicase activity region; it reads IFALKRNGRC…GRKEKIQAEE (436 aa). 59 to 66 lines the ATP pocket; it reads DEMGLGKT. Residues 157–160 carry the DEAH box motif; it reads DESH. The 157-residue stretch at 325–481 folds into the Helicase C-terminal domain; the sequence is AVKDYIKMML…GRKEKIQAEE (157 aa). The PIP-box signature appears at 519–526; it reads QHDIRSFF. Ser569 carries the post-translational modification Phosphoserine. The segment at 582–601 is disordered; the sequence is ASEDHCSPSEETPSQSKQIR. The segment covering 590 to 600 has biased composition (polar residues); it reads SEETPSQSKQI. The segment at 621–650 adopts a RanBP2-type zinc-finger fold; sequence PVEGWQCSLCTYINNSELPYCEMCETPQGS. Residue Cys630 is modified to (Microbial infection) S-methylcysteine. Residues 689-725 form a disordered region; the sequence is LAQSEPGQLADSKEETPKIEKEDGLTSQPGNEQWKSS. Positions 699 to 712 are enriched in basic and acidic residues; that stretch reads DSKEETPKIEKEDG. Over residues 713–725 the composition is skewed to polar residues; it reads LTSQPGNEQWKSS. Residues 1011 to 1051 enclose the HNH domain; it reads PGEGHFWQVDHIKPVYGGGGQCSLDNLQTLCTVCHKERTAR. An endonuclease activity region spans residues 1011–1079; that stretch reads PGEGHFWQVD…SDITRFLVKK (69 aa). The APIM motif signature appears at 1074-1078; it reads RFLVK.

The protein belongs to the SNF2/RAD54 helicase family. Interacts (via PIP-box and RanBP2-type zinc finger) with PCNA (when PCNA is polyubiquitinated via 'Lys-63'-linked polyubiquitin). Post-translationally, (Microbial infection) Methylation at Cys-630 by enteropathogenic E.coli protein NleE or S.flexneri protein OspZ: methylation disrupts ability to bind 'Lys-63'-linked ubiquitin.

The protein resides in the nucleus. It is found in the chromosome. Functionally, DNA annealing helicase and endonuclease required to maintain genome stability at stalled or collapsed replication forks by facilitating fork restart and limiting inappropriate recombination that could occur during template switching events. Recruited to the sites of stalled DNA replication by polyubiquitinated PCNA and acts as a structure-specific endonuclease that cleaves the replication fork D-loop intermediate, generating an accessible 3'-OH group in the template of the leading strand, which is amenable to extension by DNA polymerase. In addition to endonuclease activity, also catalyzes the fork regression via annealing helicase activity in order to prevent disintegration of the replication fork and the formation of double-strand breaks. This Homo sapiens (Human) protein is DNA annealing helicase and endonuclease ZRANB3.